Reading from the N-terminus, the 270-residue chain is Glutamate 5-kinase (270 aa).

Lysine 17 serves as a coordination point for ATP. Substrate is bound by residues serine 57, aspartate 144, and asparagine 160. Residues 180–181 (SD) and 222–228 (TGGMTSK) each bind ATP.

Belongs to the glutamate 5-kinase family.

The protein resides in the cytoplasm. The enzyme catalyses L-glutamate + ATP = L-glutamyl 5-phosphate + ADP. It participates in amino-acid biosynthesis; L-proline biosynthesis; L-glutamate 5-semialdehyde from L-glutamate: step 1/2. Functionally, catalyzes the transfer of a phosphate group to glutamate to form L-glutamate 5-phosphate. This chain is Glutamate 5-kinase, found in Lactococcus lactis subsp. lactis (strain IL1403) (Streptococcus lactis).